The sequence spans 171 residues: 3-hydroxydecanoyl-[acyl-carrier-protein] dehydratase (171 aa).

His69 is a catalytic residue.

Belongs to the thioester dehydratase family. FabA subfamily. As to quaternary structure, homodimer.

Its subcellular location is the cytoplasm. It carries out the reaction a (3R)-hydroxyacyl-[ACP] = a (2E)-enoyl-[ACP] + H2O. The enzyme catalyses (3R)-hydroxydecanoyl-[ACP] = (2E)-decenoyl-[ACP] + H2O. The catalysed reaction is (2E)-decenoyl-[ACP] = (3Z)-decenoyl-[ACP]. The protein operates within lipid metabolism; fatty acid biosynthesis. Its function is as follows. Necessary for the introduction of cis unsaturation into fatty acids. Catalyzes the dehydration of (3R)-3-hydroxydecanoyl-ACP to E-(2)-decenoyl-ACP and then its isomerization to Z-(3)-decenoyl-ACP. Can catalyze the dehydratase reaction for beta-hydroxyacyl-ACPs with saturated chain lengths up to 16:0, being most active on intermediate chain length. The polypeptide is 3-hydroxydecanoyl-[acyl-carrier-protein] dehydratase (Caulobacter sp. (strain K31)).